Reading from the N-terminus, the 572-residue chain is Pentatricopeptide repeat-containing protein At1g26900, mitochondrial (572 aa).

The N-terminal 117 residues, 1 to 117 (MTLAITSRLR…RAFSVFNQLR (117 aa)), are a transit peptide targeting the mitochondrion. PPR repeat units follow at residues 89-123 (NLFM…GLTL), 124-158 (DRFS…GFMV), 159-189 (FTDL…MPQS), 191-225 (DAVT…EVVV), 226-260 (NVST…GLDL), 261-291 (DLHL…AIRK), 292-326 (DVVT…KMKP), 327-361 (NSST…RIAL), 362-392 (DAIL…MKDK), 393-427 (DVKS…NCKV), 430-460 (NEIT…MVEA), and 466-496 (KVEH…LPIT). Residues 501 to 572 (AWRALLAACR…EAGYSAIEIE (72 aa)) are type E motif.

The protein belongs to the PPR family. PCMP-E subfamily.

The protein localises to the mitochondrion. In Arabidopsis thaliana (Mouse-ear cress), this protein is Pentatricopeptide repeat-containing protein At1g26900, mitochondrial (PCMP-E54).